The chain runs to 240 residues: Bidirectional sugar transporter SWEET7c (240 aa).

At Met1–Gly12 the chain is on the extracellular side. Residues Val10–Leu48 form the MtN3/slv 1 domain. The chain crosses the membrane as a helical span at residues Ile13–Ile33. Residues Ile34 to Pro46 lie on the Cytoplasmic side of the membrane. The helical transmembrane segment at Ile47–Phe67 threads the bilayer. The Extracellular segment spans residues Phe68–Lys78. A helical transmembrane segment spans residues Met79 to Leu99. Topologically, residues Gly100–Ser108 are cytoplasmic. The chain crosses the membrane as a helical span at residues Leu109 to Ile129. Positions Ile110–Thr191 constitute a MtN3/slv 2 domain. Over Met130–Met140 the chain is Extracellular. The chain crosses the membrane as a helical span at residues Pro141–Ile161. Residues Arg162–Asp164 are Cytoplasmic-facing. Residues Ile165–Tyr185 traverse the membrane as a helical segment. Residues Ala186–Pro240 are Extracellular-facing. Residues Asn225 and Asn235 are each glycosylated (N-linked (GlcNAc...) asparagine).

Belongs to the SWEET sugar transporter family. Forms homooligomers and/or heterooligomers.

The protein resides in the cell membrane. Functionally, mediates both low-affinity uptake and efflux of sugar across the plasma membrane. This Oryza sativa subsp. indica (Rice) protein is Bidirectional sugar transporter SWEET7c (SWEET7C).